The chain runs to 117 residues: Large ribosomal subunit protein bL20 (117 aa).

The protein belongs to the bacterial ribosomal protein bL20 family.

Functionally, binds directly to 23S ribosomal RNA and is necessary for the in vitro assembly process of the 50S ribosomal subunit. It is not involved in the protein synthesizing functions of that subunit. This Leptospira interrogans serogroup Icterohaemorrhagiae serovar copenhageni (strain Fiocruz L1-130) protein is Large ribosomal subunit protein bL20.